The chain runs to 268 residues: Hydroxyethylthiazole kinase (268 aa).

Residue Met45 coordinates substrate. Arg121 and Thr167 together coordinate ATP. Gly194 is a binding site for substrate.

The protein belongs to the Thz kinase family. Mg(2+) serves as cofactor.

The enzyme catalyses 5-(2-hydroxyethyl)-4-methylthiazole + ATP = 4-methyl-5-(2-phosphooxyethyl)-thiazole + ADP + H(+). Its pathway is cofactor biosynthesis; thiamine diphosphate biosynthesis; 4-methyl-5-(2-phosphoethyl)-thiazole from 5-(2-hydroxyethyl)-4-methylthiazole: step 1/1. In terms of biological role, catalyzes the phosphorylation of the hydroxyl group of 4-methyl-5-beta-hydroxyethylthiazole (THZ). This chain is Hydroxyethylthiazole kinase, found in Bacillus thuringiensis subsp. konkukian (strain 97-27).